The primary structure comprises 274 residues: Protein RecA (274 aa).

43–50 (GPESSGKT) is a binding site for ATP.

This sequence belongs to the RecA family.

It is found in the cytoplasm. Can catalyze the hydrolysis of ATP in the presence of single-stranded DNA, the ATP-dependent uptake of single-stranded DNA by duplex DNA, and the ATP-dependent hybridization of homologous single-stranded DNAs. It interacts with LexA causing its activation and leading to its autocatalytic cleavage. This is Protein RecA from Neisseria pharyngis.